A 426-amino-acid chain; its full sequence is Crinkler effector protein 4 (426 aa).

Residues 20 to 57 form an LQLFLAK domain region; that stretch reads VEIDDSAKVSKLKKVIKEENPATITCDAKDLQLFLAKK. The interval 59–107 is DWL domain; sequence DAWLDGAGAAAVELDEHGHPQGCVQMDPTLWVKNPKHFGDNFQPGEGQV. Positions 108–114 match the HVLVXXP motif motif; the sequence is HVLVVVP. The effector domain stretch occupies residues 115–426; that stretch reads EGVVGSASET…RSIPTLSYFS (312 aa).

It belongs to the Crinkler effector family.

It is found in the secreted. The protein localises to the host nucleus. Functionally, secreted effector that is critical to pathogenesis by suppressing plant immune responsess. Promotes Phytophthora infection by suppressing the H(2)O(2) accumulation and callose deposition. May induce cell death by regulating expression of cell death-related genes. The chain is Crinkler effector protein 4 from Phytophthora capsici.